Here is a 248-residue protein sequence, read N- to C-terminus: MALLEICCYSMECALTAQQNGADRVELCAAPKEGGLTPSLGVLKSVRQRVTIPVHPIIRPRGGDFCYSDGEFAAILEDVRTVRELGFPGLVTGVLDVDGNVDMPRMEKIMAAAGPLAVTFHRAFDMCANPLNTLNNLTELGIARVLTSGQKSDALQGLSKIMELIAHRDAPIIMAGAGVRAENLHHFLDAGVLEVHSSAGAWQASPMRYRNQGLSMSSDAHADEYSRYVVDGAAVAEMKGIIERHQAK.

Belongs to the CutC family. In terms of assembly, homodimer.

The protein resides in the cytoplasm. In Escherichia coli O127:H6 (strain E2348/69 / EPEC), this protein is PF03932 family protein CutC.